A 344-amino-acid polypeptide reads, in one-letter code: DNA-directed RNA polymerase subunit alpha (344 aa).

The interval 1–239 (MADHWNKLTR…DQLQSFISFD (239 aa)) is alpha N-terminal domain (alpha-NTD). An alpha C-terminal domain (alpha-CTD) region spans residues 254 to 344 (VLPYDHNLLR…ENLSKQYSED (91 aa)).

It belongs to the RNA polymerase alpha chain family. Homodimer. The RNAP catalytic core consists of 2 alpha, 1 beta, 1 beta' and 1 omega subunit. When a sigma factor is associated with the core the holoenzyme is formed, which can initiate transcription.

It carries out the reaction RNA(n) + a ribonucleoside 5'-triphosphate = RNA(n+1) + diphosphate. In terms of biological role, DNA-dependent RNA polymerase catalyzes the transcription of DNA into RNA using the four ribonucleoside triphosphates as substrates. This chain is DNA-directed RNA polymerase subunit alpha, found in Anaplasma phagocytophilum (strain HZ).